A 155-amino-acid chain; its full sequence is Interleukin-2 (155 aa).

Residues 1 to 20 (MYSRQLASCVALALVLLANS) form the signal peptide. O-linked (GalNAc...) threonine glycosylation occurs at Thr23. A disulfide bridge links Cys78 with Cys126.

It belongs to the IL-2 family.

The protein resides in the secreted. Cytokine produced by activated CD4-positive helper T-cells and to a lesser extend activated CD8-positive T-cells and natural killer (NK) cells that plays pivotal roles in the immune response and tolerance. Binds to a receptor complex composed of either the high-affinity trimeric IL-2R (IL2RA/CD25, IL2RB/CD122 and IL2RG/CD132) or the low-affinity dimeric IL-2R (IL2RB and IL2RG). Interaction with the receptor leads to oligomerization and conformation changes in the IL-2R subunits resulting in downstream signaling starting with phosphorylation of JAK1 and JAK3. In turn, JAK1 and JAK3 phosphorylate the receptor to form a docking site leading to the phosphorylation of several substrates including STAT5. This process leads to activation of several pathways including STAT, phosphoinositide-3-kinase/PI3K and mitogen-activated protein kinase/MAPK pathways. Functions as a T-cell growth factor and can increase NK-cell cytolytic activity as well. Promotes strong proliferation of activated B-cells and subsequently immunoglobulin production. Plays a pivotal role in regulating the adaptive immune system by controlling the survival and proliferation of regulatory T-cells, which are required for the maintenance of immune tolerance. Moreover, participates in the differentiation and homeostasis of effector T-cell subsets, including Th1, Th2, Th17 as well as memory CD8-positive T-cells. The polypeptide is Interleukin-2 (IL2) (Meriones unguiculatus (Mongolian jird)).